The chain runs to 398 residues: Histone-lysine N-methyltransferase ASHR2 (398 aa).

The SET domain maps to 11–270 (TLLRVAEIGG…EGREVCLSYF (260 aa)).

Belongs to the class V-like SAM-binding methyltransferase superfamily. Histone-lysine methyltransferase family. SET2 subfamily.

Its subcellular location is the nucleus. The protein resides in the chromosome. The catalysed reaction is L-lysyl-[histone] + S-adenosyl-L-methionine = N(6)-methyl-L-lysyl-[histone] + S-adenosyl-L-homocysteine + H(+). Histone methyltransferase. This chain is Histone-lysine N-methyltransferase ASHR2 (ASHR2), found in Arabidopsis thaliana (Mouse-ear cress).